The chain runs to 29 residues: Snaclec multactivase regulatory subunit (29 aa).

Residues 1–29 form the C-type lectin domain; it reads DCLPGWSVYEGRCYKVFNQKTWKAAEKFC. Cysteine 2 and cysteine 13 are oxidised to a cystine.

This sequence belongs to the snaclec family. As to quaternary structure, heterodimer of a metalloproteinase subunit and a regulatory subunit comprising two homologous polypeptides disulfide-linked. As to expression, expressed by the venom gland.

The protein localises to the secreted. Functionally, multactivase, a carinactivase-like calcium-dependent prothrombin activator, activates prothrombin via recognition of the calcium ion bound conformation of its gamma-carboxyglutamic acid (GLA) domain, and the subsequent conversion of prothrombin to active thrombin is catalyzed by the catalytic subunit. This Echis multisquamatus (Central Asian sand viper) protein is Snaclec multactivase regulatory subunit.